The chain runs to 513 residues: Quiannulatic acid synthase (513 aa).

The chain crosses the membrane as a helical span at residues 14-34; the sequence is VFTFCNIILALASLVVAQCVY. N-linked (GlcNAc...) asparagine glycosylation occurs at Asn308. Cys477 lines the heme pocket.

It belongs to the cytochrome P450 family. Requires heme as cofactor.

The protein localises to the membrane. It carries out the reaction quiannulatene + 3 reduced [NADPH--hemoprotein reductase] + 3 O2 = quiannulatate + 3 oxidized [NADPH--hemoprotein reductase] + 4 H2O + 4 H(+). It participates in secondary metabolite biosynthesis; terpenoid biosynthesis. Cytochrome P450 monooxygenase; part of the gene cluster that mediates the biosynthesis of the pentacyclic sesterterpene quiannulatic acid. The first step of the pathway is performed by the sesterterpene synthase (QS) that possesses both prenyl transferase and terpene cyclase activity, converting isopentenyl diphosphate and dimethylallyl diphosphate into geranylfarnesyl diphosphate (GFPP) and further converting GFPP into quiannulatene via an unprecedented cyclization mode which involves three rounds of hydride shifts and two successive C-C bond migrations to construct the 5-6-5-5-5 fused ring. The cytochrome P450 monooxygenase Qnn-P450 then oxidizes quiannulatene at C-19 in 3 successive reactions to afford quiannulatic acid. This chain is Quiannulatic acid synthase, found in Emericella variicolor (Aspergillus stellatus).